Reading from the N-terminus, the 169-residue chain is Podoplanin (169 aa).

Positions 1 to 22 (MWRVPVLLLVLGGAGLRVPAAG) are cleaved as a signal peptide. Residues 23-138 (ASTVRPDDII…EKDGLATVTL (116 aa)) are Extracellular-facing. The O-linked (GalNAc...) threonine glycan is linked to Thr25. The disordered stretch occupies residues 37-69 (DSVVTPGTEDSVVTPGAEDNVVTDGATEEPYES). Ser38 carries an O-linked (GalNAc...) serine glycan. Thr41 and Thr44 each carry an O-linked (GalNAc...) threonine glycan. A glycan (O-linked (GalNAc...) serine) is linked at Ser47. Residues Thr50, Thr59, Thr63, Thr72, Thr76, Thr79, Thr83, Thr92, Thr96, Thr106, Thr107, Thr108, Thr113, Thr126, and Thr127 are each glycosylated (O-linked (GalNAc...) threonine). Residues 139 to 159 (VGIIVGVLLAIGFIGGIIIVV) form a helical membrane-spanning segment. The interval 140 to 144 (GIIVG) is requires for dimerization and lipid rafts association. At 160–169 (ARKMSGRYSP) the chain is on the cytoplasmic side. The tract at residues 161–162 (RK) is requires for interaction with MSN and EZR.

This sequence belongs to the podoplanin family. As to quaternary structure, homodimer. Interacts with CLEC1B; the interaction is independent of CLEC1B glycosylation and activates CLEC1B; the interaction is dependent of sialic acid on O-glycans. Interacts with CD9; this interaction is homophilic and attenuates platelet aggregation and pulmonary metastasis induced by PDPN. Interacts with LGALS8; the interaction is glycosylation-dependent; may participate in connection of the lymphatic endothelium to the surrounding extracellular matrix. Interacts with HSPA9. Interacts (via extracellular domain) with CD44; this interaction is required for PDPN-mediated directional migration and regulation of lamellipodia extension/stabilization during cell spreading and migration. Interacts (via cytoplasmic domain) with MSN and EZR; activates RHOA and promotes epithelial-mesenchymal transition. Interacts with CCL21; relocalized PDPN to the basolateral membrane. Post-translationally, extensively O-glycosylated. Contains sialic acid residues. O-glycosylation is necessary for platelet aggregation activity. Disialylated at Thr-59; sialic acid is critical for platelet-aggregating activity and for CLEC1B interaction. In terms of processing, the N-terminus is blocked.

The protein localises to the membrane. It is found in the cell projection. It localises to the filopodium membrane. The protein resides in the lamellipodium membrane. Its subcellular location is the microvillus membrane. The protein localises to the ruffle membrane. It is found in the membrane raft. It localises to the apical cell membrane. The protein resides in the basolateral cell membrane. Its subcellular location is the invadopodium. Mediates effects on cell migration and adhesion through its different partners. During development plays a role in blood and lymphatic vessels separation by binding CLEC1B, triggering CLEC1B activation in platelets and leading to platelet activation and/or aggregation. Interaction with CD9, on the contrary, attenuates platelet aggregation and pulmonary metastasis induced by PDPN. Mediates effects on cell migration and adhesion through its different partners. Through MSN or EZR interaction promotes epithelial-mesenchymal transition (EMT) leading to ERZ phosphorylation and triggering RHOA activation leading to cell migration increase and invasiveness. Interaction with CD44 promotes directional cell migration in epithelial and tumor cells. In lymph nodes (LNs), controls fibroblastic reticular cells (FRCs) adhesion to the extracellular matrix (ECM) and contraction of the actomyosin by maintaining ERM proteins (EZR; MSN and RDX) and MYL9 activation through association with unknown transmembrane proteins. Engagement of CLEC1B by PDPN promotes FRCs relaxation by blocking lateral membrane interactions leading to reduction of ERM proteins (EZR; MSN and RDX) and MYL9 activation. Through binding with LGALS8 may participate in connection of the lymphatic endothelium to the surrounding extracellular matrix. In keratinocytes, induces changes in cell morphology showing an elongated shape, numerous membrane protrusions, major reorganization of the actin cytoskeleton, increased motility and decreased cell adhesion. Controls invadopodia stability and maturation leading to efficient degradation of the extracellular matrix (ECM) in tumor cells through modulation of RHOC activity in order to activate ROCK1/ROCK2 and LIMK1/LIMK2 and inactivation of CFL1. Required for normal lung cell proliferation and alveolus formation at birth. Does not function as a water channel or as a regulator of aquaporin-type water channels. Does not have any effect on folic acid or amino acid transport. The protein is Podoplanin (PDPN) of Canis lupus familiaris (Dog).